The primary structure comprises 308 residues: Phosphoribosylaminoimidazole-succinocarboxamide synthase (308 aa).

This sequence belongs to the SAICAR synthetase family.

It carries out the reaction 5-amino-1-(5-phospho-D-ribosyl)imidazole-4-carboxylate + L-aspartate + ATP = (2S)-2-[5-amino-1-(5-phospho-beta-D-ribosyl)imidazole-4-carboxamido]succinate + ADP + phosphate + 2 H(+). The protein operates within purine metabolism; IMP biosynthesis via de novo pathway; 5-amino-1-(5-phospho-D-ribosyl)imidazole-4-carboxamide from 5-amino-1-(5-phospho-D-ribosyl)imidazole-4-carboxylate: step 1/2. The chain is Phosphoribosylaminoimidazole-succinocarboxamide synthase from Xylella fastidiosa (strain 9a5c).